The chain runs to 224 residues: Germin-like protein 8-12 (224 aa).

A signal peptide spans 1-23 (MASSSLFLLGALLVLASWQAIVA). A disulfide bridge links cysteine 33 with cysteine 48. The region spanning 60–213 (FNAAKFDMPR…AFQVEKKLID (154 aa)) is the Cupin type-1 domain. The N-linked (GlcNAc...) asparagine glycan is linked to asparagine 78. Positions 111, 113, 118, and 158 each coordinate Mn(2+).

Belongs to the germin family. As to quaternary structure, oligomer (believed to be a pentamer but probably hexamer).

Its subcellular location is the secreted. The protein resides in the extracellular space. It localises to the apoplast. Plays a role in broad-spectrum disease resistance. Probably has no oxalate oxidase activity even if the active site is conserved. The protein is Germin-like protein 8-12 of Oryza sativa subsp. japonica (Rice).